Consider the following 160-residue polypeptide: Phosphopantetheine adenylyltransferase (160 aa).

A substrate-binding site is contributed by Ser-9. Residues 9-10 (SF) and His-17 contribute to the ATP site. Residues Lys-41, Ile-73, and Lys-87 each coordinate substrate. Residues 88-90 (GLR), Glu-98, and 122-128 (YSFVSSS) each bind ATP.

The protein belongs to the bacterial CoaD family. In terms of assembly, homohexamer. Requires Mg(2+) as cofactor.

The protein resides in the cytoplasm. The catalysed reaction is (R)-4'-phosphopantetheine + ATP + H(+) = 3'-dephospho-CoA + diphosphate. The protein operates within cofactor biosynthesis; coenzyme A biosynthesis; CoA from (R)-pantothenate: step 4/5. Its function is as follows. Reversibly transfers an adenylyl group from ATP to 4'-phosphopantetheine, yielding dephospho-CoA (dPCoA) and pyrophosphate. This Mycolicibacterium vanbaalenii (strain DSM 7251 / JCM 13017 / BCRC 16820 / KCTC 9966 / NRRL B-24157 / PYR-1) (Mycobacterium vanbaalenii) protein is Phosphopantetheine adenylyltransferase.